Here is a 221-residue protein sequence, read N- to C-terminus: ATP phosphoribosyltransferase (221 aa).

This sequence belongs to the ATP phosphoribosyltransferase family. Short subfamily. Heteromultimer composed of HisG and HisZ subunits.

It localises to the cytoplasm. It carries out the reaction 1-(5-phospho-beta-D-ribosyl)-ATP + diphosphate = 5-phospho-alpha-D-ribose 1-diphosphate + ATP. It functions in the pathway amino-acid biosynthesis; L-histidine biosynthesis; L-histidine from 5-phospho-alpha-D-ribose 1-diphosphate: step 1/9. Catalyzes the condensation of ATP and 5-phosphoribose 1-diphosphate to form N'-(5'-phosphoribosyl)-ATP (PR-ATP). Has a crucial role in the pathway because the rate of histidine biosynthesis seems to be controlled primarily by regulation of HisG enzymatic activity. The protein is ATP phosphoribosyltransferase of Symbiobacterium thermophilum (strain DSM 24528 / JCM 14929 / IAM 14863 / T).